A 63-amino-acid chain; its full sequence is uncharacterized protein (63 aa).

This is an uncharacterized protein from Avena byzantina (Oat).